The chain runs to 259 residues: uncharacterized protein (259 aa).

This is an uncharacterized protein from Bacillus anthracis.